The chain runs to 350 residues: Bifunctional nitrilase/nitrile hydratase NIT4B (350 aa).

In terms of domain architecture, CN hydrolase spans V30 to L302. E70 functions as the Proton acceptor in the catalytic mechanism. K157 is a catalytic residue. C191 (nucleophile) is an active-site residue.

Belongs to the carbon-nitrogen hydrolase superfamily. Nitrilase family. In terms of tissue distribution, highly expressed in leaves and cotyledons, lower expression in stems and roots.

It catalyses the reaction L-asparagine = 3-cyano-L-alanine + H2O. The catalysed reaction is 3-cyano-L-alanine + 2 H2O = L-aspartate + NH4(+). In terms of biological role, involved in the cyanide detoxification pathway. Has nitrilase and nitrile-hydratase activity in the ratio 3.3:1, producing both asparagine and aspartic acid from beta-cyano-L-alanine (Ala(CN)). Can also use 3-phenylpropionitrile as substrate, but not indole-3-acetonitrile. The chain is Bifunctional nitrilase/nitrile hydratase NIT4B (NIT4B) from Lupinus angustifolius (Narrow-leaved blue lupine).